We begin with the raw amino-acid sequence, 142 residues long: Large ribosomal subunit protein uL11 (142 aa).

This sequence belongs to the universal ribosomal protein uL11 family. Part of the ribosomal stalk of the 50S ribosomal subunit. Interacts with L10 and the large rRNA to form the base of the stalk. L10 forms an elongated spine to which L12 dimers bind in a sequential fashion forming a multimeric L10(L12)X complex. Post-translationally, one or more lysine residues are methylated.

Its function is as follows. Forms part of the ribosomal stalk which helps the ribosome interact with GTP-bound translation factors. The polypeptide is Large ribosomal subunit protein uL11 (Leptospira interrogans serogroup Icterohaemorrhagiae serovar copenhageni (strain Fiocruz L1-130)).